Reading from the N-terminus, the 364-residue chain is Aminomethyltransferase (364 aa).

Belongs to the GcvT family. The glycine cleavage system is composed of four proteins: P, T, L and H.

The enzyme catalyses N(6)-[(R)-S(8)-aminomethyldihydrolipoyl]-L-lysyl-[protein] + (6S)-5,6,7,8-tetrahydrofolate = N(6)-[(R)-dihydrolipoyl]-L-lysyl-[protein] + (6R)-5,10-methylene-5,6,7,8-tetrahydrofolate + NH4(+). Its function is as follows. The glycine cleavage system catalyzes the degradation of glycine. This Salmonella enteritidis PT4 (strain P125109) protein is Aminomethyltransferase.